The following is a 272-amino-acid chain: Putative hydro-lyase BRADO2538 (272 aa).

It belongs to the D-glutamate cyclase family.

The sequence is that of Putative hydro-lyase BRADO2538 from Bradyrhizobium sp. (strain ORS 278).